We begin with the raw amino-acid sequence, 122 residues long: UPF0102 protein Krad_1407 (122 aa).

The protein belongs to the UPF0102 family.

This is UPF0102 protein Krad_1407 from Kineococcus radiotolerans (strain ATCC BAA-149 / DSM 14245 / SRS30216).